Reading from the N-terminus, the 117-residue chain is UPF0127 protein PYRAB11210 (117 aa).

It belongs to the UPF0127 family.

The sequence is that of UPF0127 protein PYRAB11210 from Pyrococcus abyssi (strain GE5 / Orsay).